The following is a 138-amino-acid chain: Large ribosomal subunit protein uL16 (138 aa).

A compositionally biased stretch (basic residues) spans 1-16; the sequence is MLIPRRVKHRKQHHPG. Positions 1–24 are disordered; that stretch reads MLIPRRVKHRKQHHPGRSGAATGG.

This sequence belongs to the universal ribosomal protein uL16 family. In terms of assembly, part of the 50S ribosomal subunit.

Binds 23S rRNA and is also seen to make contacts with the A and possibly P site tRNAs. This chain is Large ribosomal subunit protein uL16, found in Arthrobacter sp. (strain FB24).